A 252-amino-acid polypeptide reads, in one-letter code: Hydroxyacylglutathione hydrolase (252 aa).

H52, H54, D56, H57, H107, D128, and H166 together coordinate Zn(2+).

The protein belongs to the metallo-beta-lactamase superfamily. Glyoxalase II family. Monomer. The cofactor is Zn(2+).

It carries out the reaction an S-(2-hydroxyacyl)glutathione + H2O = a 2-hydroxy carboxylate + glutathione + H(+). It functions in the pathway secondary metabolite metabolism; methylglyoxal degradation; (R)-lactate from methylglyoxal: step 2/2. In terms of biological role, thiolesterase that catalyzes the hydrolysis of S-D-lactoyl-glutathione to form glutathione and D-lactic acid. This is Hydroxyacylglutathione hydrolase from Neisseria meningitidis serogroup C (strain 053442).